A 1592-amino-acid polypeptide reads, in one-letter code: Probable serine/threonine-protein kinase DDB_G0293958 (1592 aa).

Residues 1-302 form the Protein kinase 1 domain; sequence MTGFEIFKKK…CLNYLKEKLI (302 aa). ATP contacts are provided by residues 2–10 and Lys-43; that span reads TGFEIFKKK. Catalysis depends on Asp-158, which acts as the Proton acceptor. Disordered regions lie at residues 348–402, 455–526, and 837–867; these read INNN…NNNN, FNDI…SNYN, and KNNN…NDKS. Over residues 349-402 the composition is skewed to low complexity; that stretch reads NNNNNNNNNNNNNNNNNNNNNNNNNNNNNNNNNNNNNNNNNNNNNNNNNNNNNN. Residues 461 to 518 adopt a coiled-coil conformation; that stretch reads STTGEEEEEEKKDNLKRQNENNQIEQEDKGEKHLKETLNNNNNNNNNNNNNNNNNNNN. The segment covering 486–496 has biased composition (basic and acidic residues); the sequence is QEDKGEKHLKE. 2 stretches are compositionally biased toward low complexity: residues 499–526 and 837–864; these read NNNN…SNYN and KNNN…NNSN. Positions 1342–1592 constitute a Protein kinase 2 domain; the sequence is LGTYNLIGDS…KELIECLNKL (251 aa). Residues 1348 to 1356 and Lys-1376 contribute to the ATP site; that span reads IGDSVFRNI. Asp-1474 serves as the catalytic Proton acceptor.

It belongs to the protein kinase superfamily. Ser/Thr protein kinase family.

The enzyme catalyses L-seryl-[protein] + ATP = O-phospho-L-seryl-[protein] + ADP + H(+). It carries out the reaction L-threonyl-[protein] + ATP = O-phospho-L-threonyl-[protein] + ADP + H(+). In Dictyostelium discoideum (Social amoeba), this protein is Probable serine/threonine-protein kinase DDB_G0293958.